Consider the following 398-residue polypeptide: Elongation factor Tu (398 aa).

Residues 10–207 (KPHVNIGTIG…TVDEYIPEPE (198 aa)) enclose the tr-type G domain. Residues 19–26 (GHVDHGKT) are G1. 19–26 (GHVDHGKT) serves as a coordination point for GTP. Thr26 provides a ligand contact to Mg(2+). The interval 63-67 (GITIN) is G2. A G3 region spans residues 84 to 87 (DAPG). GTP is bound by residues 84–88 (DAPGH) and 139–142 (NKVD). The interval 139 to 142 (NKVD) is G4. Residues 177 to 179 (SAL) form a G5 region.

This sequence belongs to the TRAFAC class translation factor GTPase superfamily. Classic translation factor GTPase family. EF-Tu/EF-1A subfamily. Monomer.

The protein resides in the cytoplasm. The catalysed reaction is GTP + H2O = GDP + phosphate + H(+). Functionally, GTP hydrolase that promotes the GTP-dependent binding of aminoacyl-tRNA to the A-site of ribosomes during protein biosynthesis. The polypeptide is Elongation factor Tu (Streptococcus sanguinis (strain SK36)).